Consider the following 256-residue polypeptide: Low molecular mass lipoprotein 3 (256 aa).

The signal sequence occupies residues 1–17 (MKPAIVILCLFVASLYA).

This sequence belongs to the 30 kDa lipoprotein family. As to expression, detected in larval hemolymph (at protein level).

The protein localises to the secreted. This is Low molecular mass lipoprotein 3 from Bombyx mori (Silk moth).